A 686-amino-acid polypeptide reads, in one-letter code: Endonuclease GajA (686 aa).

The ATPase domain stretch occupies residues 1–423 (MYLKSLKIYN…NYVTTKNNYT (423 aa)). 52-56 (NCGKT) contacts ATP. The tract at residues 463 to 599 (FFSDAIIFVE…TSFEEAFILT (137 aa)) is toprim domain. A divalent metal cation is bound by residues E472, E476, D559, and E604.

Homotetramer. Forms the core of the anti-phage defense complex. Interacts with GajB; 2 GajB dimers dock at opposite sides of the GajA complex to form a 4:4 GajA-GajB assembly (GajAB). GajAB interacts with Bacillus phage Phi3T Gad1 protein; this interaction forms a 4:4:8 GajAB-Gad1 complex and leads to GajAB inhibition. Mg(2+) is required as a cofactor.

In terms of biological role, component of antiviral defense system Gabija type II, composed of GajA and GajB. Probably a nicking endonuclease that is strongly inhibited by physiological levels of nucleotides (NTP and dNTP). Expression of Gabija type II in B.subtilis (strain BEST7003) confers resistance to phages phi105, and SpBeta. During viral replication, when nucleotides are rapidly consumed, it is de-suppressed and degrades target DNA. This is Endonuclease GajA from Bacillus cereus (strain HuB5-5).